The sequence spans 586 residues: Kelch-like protein 7 (586 aa).

One can recognise a BTB domain in the interval 44 to 111 (CDVILMVQER…AYTARISVNS (68 aa)). In terms of domain architecture, BACK spans 146 to 248 (CLGISVLAEC…SKNFLSKTVQ (103 aa)). 6 Kelch repeats span residues 294–336 (RIAL…FWDN), 337–382 (VVYI…AAEG), 383–430 (KIYT…EANG), 431–481 (LIYV…FVKD), 483–528 (IFAV…AVGS), and 530–575 (VYVL…CVVD).

Homodimer. Component of the BCR(KLHL7) E3 ubiquitin ligase complex, at least composed of CUL3 and KLHL7 and RBX1. Widely expressed, with highest levels in adult and fetal heart, CNS and adult testis.

The protein resides in the nucleus. Its subcellular location is the cytoplasm. It functions in the pathway protein modification; protein ubiquitination. Substrate-specific adapter of a BCR (BTB-CUL3-RBX1) E3 ubiquitin ligase complex. The BCR(KLHL7) complex acts by mediating ubiquitination and subsequent degradation of substrate proteins. Probably mediates 'Lys-48'-linked ubiquitination. This Homo sapiens (Human) protein is Kelch-like protein 7 (KLHL7).